Here is a 388-residue protein sequence, read N- to C-terminus: Chorismate synthase (388 aa).

NADP(+)-binding residues include arginine 39 and arginine 45. Residues 132–134 (RSS), 251–252 (NA), glycine 296, 311–315 (KPIPT), and arginine 337 each bind FMN.

The protein belongs to the chorismate synthase family. As to quaternary structure, homotetramer. FMNH2 serves as cofactor.

The enzyme catalyses 5-O-(1-carboxyvinyl)-3-phosphoshikimate = chorismate + phosphate. Its pathway is metabolic intermediate biosynthesis; chorismate biosynthesis; chorismate from D-erythrose 4-phosphate and phosphoenolpyruvate: step 7/7. In terms of biological role, catalyzes the anti-1,4-elimination of the C-3 phosphate and the C-6 proR hydrogen from 5-enolpyruvylshikimate-3-phosphate (EPSP) to yield chorismate, which is the branch point compound that serves as the starting substrate for the three terminal pathways of aromatic amino acid biosynthesis. This reaction introduces a second double bond into the aromatic ring system. The polypeptide is Chorismate synthase (Staphylococcus haemolyticus (strain JCSC1435)).